A 359-amino-acid polypeptide reads, in one-letter code: 4-galactosyl-N-acetylglucosaminide 3-alpha-L-fucosyltransferase 9 (359 aa).

Topologically, residues 1 to 11 (MTSTSKGILRP) are cytoplasmic. The chain crosses the membrane as a helical; Signal-anchor for type II membrane protein span at residues 12–32 (FLIVCIILGCFVACLLIYIKP). Topologically, residues 33–359 (TNSWVFSPME…VGNLEKWFWN (327 aa)) are lumenal. The N-linked (GlcNAc...) asparagine glycan is linked to Asn62. Residues 63-168 (ETTILVWVWP…RRDSDIQVPY (106 aa)) are acceptor-binding. An a beta-D-galactosyl-(1-&gt;4)-N-acetyl-beta-D-glucosaminyl derivative-binding site is contributed by Gln75. 3 disulfides stabilise this stretch: Cys82–Cys335, Cys91–Cys338, and Cys190–Cys238. N-linked (GlcNAc...) asparagine glycosylation is present at Asn101. Position 137 (Glu137) interacts with a beta-D-galactosyl-(1-&gt;4)-N-acetyl-beta-D-glucosaminyl derivative. Catalysis depends on Glu137, which acts as the Nucleophile. A GDP-beta-L-fucose-binding site is contributed by Glu137. Asn153 carries an N-linked (GlcNAc...) asparagine glycan. The GDP-beta-L-fucose site is built by Tyr168, Val192, Ser194, Asn195, Arg202, Val226, Tyr241, Asn246, Tyr252, Glu255, and Lys256. The segment at 169–326 (GFLTVSTSPF…NWRKDFTVNL (158 aa)) is donor-binding. The acceptor-binding stretch occupies residues 327 to 359 (PRFWESHACLACDHVKRHQEYKSVGNLEKWFWN).

It belongs to the glycosyltransferase 10 family. Homodimer. Post-translationally, N-glycosylated with complex-type N-glycans.

The protein resides in the golgi apparatus. The protein localises to the trans-Golgi network membrane. Its subcellular location is the golgi apparatus membrane. The enzyme catalyses a beta-D-galactosyl-(1-&gt;4)-N-acetyl-beta-D-glucosaminyl derivative + GDP-beta-L-fucose = a beta-D-galactosyl-(1-&gt;4)-[alpha-L-fucosyl-(1-&gt;3)]-N-acetyl-beta-D-glucosaminyl derivative + GDP + H(+). It carries out the reaction an alpha-Neu5Ac-(2-&gt;3)-beta-D-Gal-(1-&gt;4)-beta-D-GlcNAc-(1-&gt;3)-beta-D-Gal-(1-&gt;4)-beta-D-GlcNAc derivative + GDP-beta-L-fucose = an alpha-Neu5Ac-(2-&gt;3)-beta-D-Gal-(1-&gt;4)-beta-D-GlcNAc-(1-&gt;3)-beta-D-Gal-(1-&gt;4)-[alpha-L-Fuc-(1-&gt;3)]-beta-D-GlcNAc derivative + GDP + H(+). It catalyses the reaction alpha-N-glycoloylneuraminosyl-(2-&gt;3)-beta-D-galactosyl-(1-&gt;4)-N-acetyl-beta-D-glucosaminyl-(1-&gt;3)-beta-D-galactosyl-(1-&gt;4)-N-acetyl-beta-D-glucosaminyl-(1-&gt;3)-beta-D-galactosyl-(1-&gt;4)-beta-D-glucosyl-(1&lt;-&gt;1')-ceramide + GDP-beta-L-fucose = alpha-N-glycoloylneuraminosyl-(2-&gt;3)-beta-D-galactosyl-(1-&gt;4)-N-acetyl-beta-D-glucosaminyl-(1-&gt;3)-beta-D-galactosyl-(1-&gt;4)-[alpha-L-fucosyl-(1-&gt;3)]-N-acetyl-beta-D-glucosaminyl-(1-&gt;3)-beta-D-galactosyl-(1-&gt;4)-beta-D-glucosyl-(1&lt;-&gt;1')-ceramide + GDP + H(+). The catalysed reaction is alpha-D-galactosyl-(1-&gt;3)-beta-D-galactosyl-(1-&gt;4)-N-acetyl-beta-D-glucosaminyl-(1-&gt;3)-beta-D-galactosyl-(1-&gt;4)-beta-D-glucosyl-(1&lt;-&gt;1')-ceramide + GDP-beta-L-fucose = a neolactoside IV(3)-alpha-Gal,III(3)-alpha-Fuc-nLc4Cer + GDP + H(+). The enzyme catalyses a neolactoside nLc4Cer + GDP-beta-L-fucose = a neolactoside III(3)-alpha-Fuc-nLc4Cer + GDP + H(+). It carries out the reaction an N-acetyl-alpha-neuraminyl-(2-&gt;3)-beta-D-galactosyl-(1-&gt;4)-N-acetyl-beta-D-glucosaminyl derivative + GDP-beta-L-fucose = an alpha-Neu5Ac-(2-&gt;3)-beta-D-Gal-(1-&gt;4)-[alpha-L-Fuc-(1-&gt;3)]-beta-D-GlcNAc derivative + GDP + H(+). It catalyses the reaction beta-D-Gal-(1-&gt;4)-beta-D-GlcNAc-(1-&gt;3)-beta-D-Gal-(1-&gt;4)-D-Glc + GDP-beta-L-fucose = beta-D-Gal-(1-&gt;4)-[alpha-L-Fuc-(1-&gt;3)]-beta-D-GlcNAc-(1-&gt;3)-beta-D-Gal-(1-&gt;4)-D-Glc + GDP + H(+). The catalysed reaction is an alpha-L-Fuc-(1-&gt;2)-beta-D-Gal-(1-&gt;4)-beta-D-GlcNAc derivative + GDP-beta-L-fucose = an alpha-L-Fuc-(1-&gt;2)-beta-D-Gal-(1-&gt;4)-[alpha-L-Fuc-(1-&gt;3)]-beta-D-GlcNAc derivative + GDP + H(+). The protein operates within protein modification; protein glycosylation. It participates in glycolipid biosynthesis. Activated by Mn2+. Functionally, catalyzes alpha(1-&gt;3) linkage of fucosyl moiety transferred from GDP-beta-L-fucose to N-acetyl glucosamine (GlcNAc) within type 2 lactosamine (LacNAc, beta-D-Gal-(1-&gt;4)-beta-D-GlcNAc-) glycan attached to glycolipids and N- or O-linked glycoproteins. Fucosylates distal type 2 LacNAc and its fucosylated (H-type 2 LacNAc) and sialylated (sialyl-type 2 LacNAc) derivatives to form Lewis x (Lex) (CD15) and Lewis y (Ley) antigenic epitopes involved in cell adhesion and differentiation. Generates Lex epitopes in the brain, presumably playing a role in the maintenance of neuronal stemness and neurite outgrowth in progenitor neural cells. Fucosylates the internal type 2 LacNAc unit of the polylactosamine chain to form VIM-2 antigen that serves as recognition epitope for SELE. Can also modify milk oligosaccharides in particular type 2 tetrasaccharide LNnT. The polypeptide is 4-galactosyl-N-acetylglucosaminide 3-alpha-L-fucosyltransferase 9 (Rattus norvegicus (Rat)).